Reading from the N-terminus, the 1119-residue chain is Translation initiation factor IF-2 (1119 aa).

Disordered regions lie at residues 64–463 (SIKK…TSGY) and 477–507 (RPKKEKSDESKSQKTIKQFKKKKKETTRQRQ). Residues 70-102 (IKKDNYKQNKEDKSSLISSVEEKPFKDNPEKKP) show a composition bias toward basic and acidic residues. Polar residues-rich tracts occupy residues 116-153 (IISNQPKSLNKPTITNSSQSQANLTNQNLNSKTSQNLN) and 182-212 (KNTTKNVQSNESSQNILNSGGGRQISNKPDQ). Residues 213–224 (NSSKSKTKNINN) are compositionally biased toward low complexity. Composition is skewed to polar residues over residues 242 to 257 (NKQNNKQKTSFKQTVP), 281 to 297 (FNRQTNTNRPGAPSSNK), 319 to 328 (FNRQVNTNRS), and 375 to 387 (QVINNNEKQNSET). Residues 421-435 (GKTDWDDSAKLEALR) show a composition bias toward basic and acidic residues. The span at 493 to 507 (KQFKKKKKETTRQRQ) shows a compositional bias: basic residues. The tr-type G domain occupies 610 to 782 (KRPPVITVMG…ILLVSEVEDL (173 aa)). Residues 619 to 626 (GHVDHGKT) are G1. 619–626 (GHVDHGKT) serves as a coordination point for GTP. Residues 644-648 (GITQH) form a G2 region. The interval 669 to 672 (DTPG) is G3. GTP is bound by residues 669-673 (DTPGH) and 723-726 (NKID). Positions 723 to 726 (NKID) are G4. Residues 759 to 761 (SAI) are G5.

The protein belongs to the TRAFAC class translation factor GTPase superfamily. Classic translation factor GTPase family. IF-2 subfamily.

The protein localises to the cytoplasm. Functionally, one of the essential components for the initiation of protein synthesis. Protects formylmethionyl-tRNA from spontaneous hydrolysis and promotes its binding to the 30S ribosomal subunits. Also involved in the hydrolysis of GTP during the formation of the 70S ribosomal complex. The sequence is that of Translation initiation factor IF-2 from Prochlorococcus marinus (strain MIT 9215).